We begin with the raw amino-acid sequence, 251 residues long: Ubiquinone/menaquinone biosynthesis C-methyltransferase UbiE (251 aa).

Residues T74, D95, N123 to A124, and S140 contribute to the S-adenosyl-L-methionine site.

It belongs to the class I-like SAM-binding methyltransferase superfamily. MenG/UbiE family.

The enzyme catalyses a 2-demethylmenaquinol + S-adenosyl-L-methionine = a menaquinol + S-adenosyl-L-homocysteine + H(+). It carries out the reaction a 2-methoxy-6-(all-trans-polyprenyl)benzene-1,4-diol + S-adenosyl-L-methionine = a 5-methoxy-2-methyl-3-(all-trans-polyprenyl)benzene-1,4-diol + S-adenosyl-L-homocysteine + H(+). It functions in the pathway quinol/quinone metabolism; menaquinone biosynthesis; menaquinol from 1,4-dihydroxy-2-naphthoate: step 2/2. The protein operates within cofactor biosynthesis; ubiquinone biosynthesis. Its function is as follows. Methyltransferase required for the conversion of demethylmenaquinol (DMKH2) to menaquinol (MKH2) and the conversion of 2-polyprenyl-6-methoxy-1,4-benzoquinol (DDMQH2) to 2-polyprenyl-3-methyl-6-methoxy-1,4-benzoquinol (DMQH2). The polypeptide is Ubiquinone/menaquinone biosynthesis C-methyltransferase UbiE (Pectobacterium carotovorum subsp. carotovorum (strain PC1)).